The chain runs to 596 residues: Cysteine--tRNA ligase (596 aa).

A unknown region spans residues 1–199 (MKSKTFLEKN…SQRYFEELRK (199 aa)). Cys212 is a Zn(2+) binding site. The 'HIGH' region signature appears at 214-224 (PTVYDEVHIGN). Cys377, His403, and Glu407 together coordinate Zn(2+). The short motif at 435 to 439 (KMSKS) is the 'KMSKS' region element. Lys438 serves as a coordination point for ATP.

This sequence belongs to the class-I aminoacyl-tRNA synthetase family. Monomer. It depends on Zn(2+) as a cofactor.

It localises to the cytoplasm. The enzyme catalyses tRNA(Cys) + L-cysteine + ATP = L-cysteinyl-tRNA(Cys) + AMP + diphosphate. The chain is Cysteine--tRNA ligase (cysS) from Mycoplasmopsis pulmonis (strain UAB CTIP) (Mycoplasma pulmonis).